The sequence spans 203 residues: Outer-membrane lipoprotein LolB (203 aa).

The first 18 residues, 1 to 18 (MTLRSFLILLLSSIVLAG), serve as a signal peptide directing secretion. C19 carries the N-palmitoyl cysteine lipid modification. C19 carries the S-diacylglycerol cysteine lipid modification.

This sequence belongs to the LolB family. As to quaternary structure, monomer.

It is found in the cell outer membrane. Functionally, plays a critical role in the incorporation of lipoproteins in the outer membrane after they are released by the LolA protein. The sequence is that of Outer-membrane lipoprotein LolB from Vibrio campbellii (strain ATCC BAA-1116).